Reading from the N-terminus, the 315-residue chain is DNA-directed RNA polymerase subunit alpha (315 aa).

An alpha N-terminal domain (alpha-NTD) region spans residues 1–228 (MAQFQIECVE…DLFNPLKDIS (228 aa)). Residues 243-315 (TAQIPIEELQ…LPQERSSKHN (73 aa)) are alpha C-terminal domain (alpha-CTD).

Belongs to the RNA polymerase alpha chain family. As to quaternary structure, homodimer. In cyanobacteria the RNAP catalytic core is composed of 2 alpha, 1 beta, 1 beta', 1 gamma and 1 omega subunit. When a sigma factor is associated with the core the holoenzyme is formed, which can initiate transcription.

It catalyses the reaction RNA(n) + a ribonucleoside 5'-triphosphate = RNA(n+1) + diphosphate. In terms of biological role, DNA-dependent RNA polymerase catalyzes the transcription of DNA into RNA using the four ribonucleoside triphosphates as substrates. The protein is DNA-directed RNA polymerase subunit alpha of Nostoc sp. (strain PCC 7120 / SAG 25.82 / UTEX 2576).